A 143-amino-acid polypeptide reads, in one-letter code: 3-hydroxyacyl-[acyl-carrier-protein] dehydratase FabZ (143 aa).

H49 is an active-site residue.

This sequence belongs to the thioester dehydratase family. FabZ subfamily.

It localises to the cytoplasm. The enzyme catalyses a (3R)-hydroxyacyl-[ACP] = a (2E)-enoyl-[ACP] + H2O. Involved in unsaturated fatty acids biosynthesis. Catalyzes the dehydration of short chain beta-hydroxyacyl-ACPs and long chain saturated and unsaturated beta-hydroxyacyl-ACPs. The polypeptide is 3-hydroxyacyl-[acyl-carrier-protein] dehydratase FabZ (Wolbachia sp. subsp. Drosophila simulans (strain wRi)).